Consider the following 70-residue polypeptide: Large ribosomal subunit protein bL28 (70 aa).

Belongs to the bacterial ribosomal protein bL28 family.

This chain is Large ribosomal subunit protein bL28, found in Maridesulfovibrio salexigens (strain ATCC 14822 / DSM 2638 / NCIMB 8403 / VKM B-1763) (Desulfovibrio salexigens).